We begin with the raw amino-acid sequence, 400 residues long: Putative transposase for insertion sequence element IS5376 (400 aa).

In terms of domain architecture, HTH IS21-type spans 5–67; it reads GEFFMIKEMY…PFKPYLQKRM (63 aa). Residues 20–39 constitute a DNA-binding region (H-T-H motif); that stretch reads ISDIARELGIDRKTVRKYIH. Positions 35 to 55 are disordered; it reads RKYIHSPNPPSKSKRKQRKSK. The 175-residue stretch at 113-287 folds into the Integrase catalytic domain; sequence YETLPGEQMQ…SPQERWAEES (175 aa).

The protein belongs to the transposase IS21/IS408/IS1162 family.

Involved in the transposition of the insertion sequence. In Geobacillus stearothermophilus (Bacillus stearothermophilus), this protein is Putative transposase for insertion sequence element IS5376.